The following is a 362-amino-acid chain: Phosphoserine aminotransferase (362 aa).

Positions 9 and 42 each coordinate L-glutamate. Pyridoxal 5'-phosphate contacts are provided by residues 76–77 (GR), Trp102, Thr153, Asp174, and Gln197. N6-(pyridoxal phosphate)lysine is present on Lys198. 239 to 240 (NT) lines the pyridoxal 5'-phosphate pocket.

The protein belongs to the class-V pyridoxal-phosphate-dependent aminotransferase family. SerC subfamily. In terms of assembly, homodimer. The cofactor is pyridoxal 5'-phosphate.

The protein resides in the cytoplasm. The catalysed reaction is O-phospho-L-serine + 2-oxoglutarate = 3-phosphooxypyruvate + L-glutamate. It catalyses the reaction 4-(phosphooxy)-L-threonine + 2-oxoglutarate = (R)-3-hydroxy-2-oxo-4-phosphooxybutanoate + L-glutamate. It functions in the pathway amino-acid biosynthesis; L-serine biosynthesis; L-serine from 3-phospho-D-glycerate: step 2/3. It participates in cofactor biosynthesis; pyridoxine 5'-phosphate biosynthesis; pyridoxine 5'-phosphate from D-erythrose 4-phosphate: step 3/5. In terms of biological role, catalyzes the reversible conversion of 3-phosphohydroxypyruvate to phosphoserine and of 3-hydroxy-2-oxo-4-phosphonooxybutanoate to phosphohydroxythreonine. In Klebsiella pneumoniae subsp. pneumoniae (strain ATCC 700721 / MGH 78578), this protein is Phosphoserine aminotransferase.